Consider the following 259-residue polypeptide: Large ribosomal subunit protein eL8 (259 aa).

The disordered stretch occupies residues 1 to 24; it reads MAPKSKKVAPSPFAQPKAAKTTKN. Phosphoserine is present on residues serine 11 and serine 33.

This sequence belongs to the eukaryotic ribosomal protein eL8 family. As to quaternary structure, component of the large ribosomal subunit (LSU). Mature yeast ribosomes consist of a small (40S) and a large (60S) subunit. The 40S small subunit contains 1 molecule of ribosomal RNA (18S rRNA) and at least 33 different proteins. The large 60S subunit contains 3 rRNA molecules (25S, 5.8S and 5S rRNA) and at least 46 different proteins.

The protein localises to the cytoplasm. In terms of biological role, component of the ribosome, a large ribonucleoprotein complex responsible for the synthesis of proteins in the cell. The small ribosomal subunit (SSU) binds messenger RNAs (mRNAs) and translates the encoded message by selecting cognate aminoacyl-transfer RNA (tRNA) molecules. The large subunit (LSU) contains the ribosomal catalytic site termed the peptidyl transferase center (PTC), which catalyzes the formation of peptide bonds, thereby polymerizing the amino acids delivered by tRNAs into a polypeptide chain. The nascent polypeptides leave the ribosome through a tunnel in the LSU and interact with protein factors that function in enzymatic processing, targeting, and the membrane insertion of nascent chains at the exit of the ribosomal tunnel. This chain is Large ribosomal subunit protein eL8 (rpl8), found in Schizosaccharomyces pombe (strain 972 / ATCC 24843) (Fission yeast).